The primary structure comprises 159 residues: Insulin-like peptide 7 (159 aa).

An N-terminal signal peptide occupies residues 1–31; sequence MTRMIIQNSGSWTLCGAVLLFVLPLIPTPEA. Intrachain disulfides connect cysteine 63–cysteine 136, cysteine 75–cysteine 150, and cysteine 135–cysteine 141. The propeptide at 90–121 is connecting peptide; sequence TGNDEAWIKKTTTEPDGSTWLHVNYANMFLRS.

This sequence belongs to the insulin family. In terms of assembly, heterodimer of a B chain and an A chain linked by two disulfide bonds. As to expression, broadly expressed at a low level throughout the embryo, except the yolk. Expressed at a moderate level in the embryonic midgut. Larval expression is restricted to ten cells of the ventral nerve cord - in four pairs of centrally located cells in the most posterior abdominal segments and in one pair of dorsally located cells in the A1 or A2 segments.

It is found in the secreted. Possible ligand of InR/insulin-like receptor. The protein is Insulin-like peptide 7 of Drosophila melanogaster (Fruit fly).